A 174-amino-acid chain; its full sequence is Shikimate kinase 2 (174 aa).

12-17 (GAGKTT) contacts ATP. Residues Thr16 and Asp32 each contribute to the Mg(2+) site. Positions 34, 58, and 79 each coordinate substrate. The LID domain stretch occupies residues 112–126 (MQQPESTQRPSLTGK). Arg120 is an ATP binding site. Arg139 is a binding site for substrate.

Belongs to the shikimate kinase family. AroL subfamily. In terms of assembly, monomer. The cofactor is Mg(2+).

The protein localises to the cytoplasm. It catalyses the reaction shikimate + ATP = 3-phosphoshikimate + ADP + H(+). Its pathway is metabolic intermediate biosynthesis; chorismate biosynthesis; chorismate from D-erythrose 4-phosphate and phosphoenolpyruvate: step 5/7. Its function is as follows. Catalyzes the specific phosphorylation of the 3-hydroxyl group of shikimic acid using ATP as a cosubstrate. This is Shikimate kinase 2 from Photorhabdus laumondii subsp. laumondii (strain DSM 15139 / CIP 105565 / TT01) (Photorhabdus luminescens subsp. laumondii).